Reading from the N-terminus, the 274-residue chain is Putative hydro-lyase Veis_4744 (274 aa).

It belongs to the D-glutamate cyclase family.

The protein is Putative hydro-lyase Veis_4744 of Verminephrobacter eiseniae (strain EF01-2).